A 282-amino-acid chain; its full sequence is Protease HtpX homolog (282 aa).

Helical transmembrane passes span 6–26 (TFIL…LIGG) and 28–48 (QGVI…YFFS). His-130 contributes to the Zn(2+) binding site. Glu-131 is a catalytic residue. His-134 serves as a coordination point for Zn(2+). 2 helical membrane passes run 140-160 (ILIG…ANFA) and 177-197 (ILMI…QMAI). Position 202 (Glu-202) interacts with Zn(2+).

The protein belongs to the peptidase M48B family. The cofactor is Zn(2+).

It is found in the cell inner membrane. The polypeptide is Protease HtpX homolog (Campylobacter hominis (strain ATCC BAA-381 / DSM 21671 / CCUG 45161 / LMG 19568 / NCTC 13146 / CH001A)).